Here is an 88-residue protein sequence, read N- to C-terminus: Pape peptide (88 aa).

The first 22 residues, 1 to 22, serve as a signal peptide directing secretion; that stretch reads MNRKTLLVIFFVTLLIAEEVNS. The propeptide occupies 23-45; it reads FRLGGFLKKIWRSKLVKRLRSKG. A disordered region spans residues 49–88; that stretch reads LKEALAPEPAPEPAPEPAPEAAPEAAPEPAAAAPERRRRR. Residues 56–68 show a composition bias toward pro residues; the sequence is EPAPEPAPEPAPE. PAPE repeat units follow at residues 57-60, 61-64, and 65-68; these read PAPE. Positions 69–81 are enriched in low complexity; that stretch reads AAPEAAPEPAAAA.

In terms of tissue distribution, expressed by the venom gland.

It localises to the secreted. The protein is Pape peptide of Tityus serrulatus (Brazilian scorpion).